Here is a 360-residue protein sequence, read N- to C-terminus: Phospho-N-acetylmuramoyl-pentapeptide-transferase (360 aa).

The next 10 membrane-spanning stretches (helical) occupy residues 26 to 46 (AIVS…RMIA), 72 to 92 (PTMG…LWAY), 94 to 114 (SNPY…IGFV), 132 to 152 (WKYF…YLAG), 168 to 188 (VMPQ…VGTG), 199 to 219 (GLAI…AWAT), 236 to 256 (AGEL…FLWF), 263 to 283 (VFMG…IAVL), 288 to 308 (FLLV…ILQV), and 338 to 358 (VIVR…ATLK).

This sequence belongs to the glycosyltransferase 4 family. MraY subfamily. Mg(2+) serves as cofactor.

It localises to the cell inner membrane. It carries out the reaction UDP-N-acetyl-alpha-D-muramoyl-L-alanyl-gamma-D-glutamyl-meso-2,6-diaminopimeloyl-D-alanyl-D-alanine + di-trans,octa-cis-undecaprenyl phosphate = di-trans,octa-cis-undecaprenyl diphospho-N-acetyl-alpha-D-muramoyl-L-alanyl-D-glutamyl-meso-2,6-diaminopimeloyl-D-alanyl-D-alanine + UMP. Its pathway is cell wall biogenesis; peptidoglycan biosynthesis. Its function is as follows. Catalyzes the initial step of the lipid cycle reactions in the biosynthesis of the cell wall peptidoglycan: transfers peptidoglycan precursor phospho-MurNAc-pentapeptide from UDP-MurNAc-pentapeptide onto the lipid carrier undecaprenyl phosphate, yielding undecaprenyl-pyrophosphoryl-MurNAc-pentapeptide, known as lipid I. The polypeptide is Phospho-N-acetylmuramoyl-pentapeptide-transferase (Klebsiella pneumoniae subsp. pneumoniae (strain ATCC 700721 / MGH 78578)).